The primary structure comprises 254 residues: Hydroxyacylglutathione hydrolase (254 aa).

Histidine 54, histidine 56, aspartate 58, histidine 59, histidine 111, aspartate 130, and histidine 168 together coordinate Zn(2+).

This sequence belongs to the metallo-beta-lactamase superfamily. Glyoxalase II family. In terms of assembly, monomer. The cofactor is Zn(2+).

The enzyme catalyses an S-(2-hydroxyacyl)glutathione + H2O = a 2-hydroxy carboxylate + glutathione + H(+). The protein operates within secondary metabolite metabolism; methylglyoxal degradation; (R)-lactate from methylglyoxal: step 2/2. In terms of biological role, thiolesterase that catalyzes the hydrolysis of S-D-lactoyl-glutathione to form glutathione and D-lactic acid. The chain is Hydroxyacylglutathione hydrolase from Legionella pneumophila (strain Paris).